A 142-amino-acid chain; its full sequence is Hemoglobin subunit alpha-A (142 aa).

Residues 2–142 (VLSAADKTNV…VGAVLTAKYR (141 aa)) enclose the Globin domain. Position 59 (histidine 59) interacts with O2. Histidine 88 contacts heme b.

It belongs to the globin family. Heterotetramer of two alpha chains and two beta chains. As to expression, red blood cells.

Involved in oxygen transport from the lung to the various peripheral tissues. The protein is Hemoglobin subunit alpha-A (HBAA) of Cairina moschata (Muscovy duck).